The chain runs to 470 residues: Neuraminidase (470 aa).

At 1–6 (MNPNQK) the chain is on the intravirion side. A helical membrane pass occupies residues 7-27 (IITIGSICMTIGIISLILQIG). The involved in apical transport and lipid raft association stretch occupies residues 11–33 (GSICMTIGIISLILQIGNIISIW). Residues 28 to 470 (NIISIWVSHS…GAELPFTIDK (443 aa)) lie on the Virion surface side of the membrane. The hypervariable stalk region stretch occupies residues 36–90 (HSIQTGSQNHTGICNQRIITYENSTWVNQTYVNINNTNVVAGKDTTSVTLAGNSS). N-linked (GlcNAc...) asparagine; by host glycosylation is found at Asn44, Asn58, Asn63, Asn70, and Asn88. Positions 91–470 (LCPIRGWAIY…GAELPFTIDK (380 aa)) are head of neuraminidase. Cystine bridges form between Cys92-Cys417, Cys124-Cys129, Cys184-Cys231, Cys233-Cys238, Cys279-Cys292, Cys281-Cys290, Cys318-Cys335, and Cys421-Cys447. Arg118 contacts substrate. A glycan (N-linked (GlcNAc...) asparagine; by host) is linked at Asn146. Catalysis depends on Asp151, which acts as the Proton donor/acceptor. Residue Arg152 participates in substrate binding. Asn235 is a glycosylation site (N-linked (GlcNAc...) asparagine; by host). 277 to 278 (EE) lines the substrate pocket. Arg293 is a substrate binding site. Asp294, Gly298, and Asp324 together coordinate Ca(2+). Asn365 carries N-linked (GlcNAc...) asparagine; by host glycosylation. Residue Arg368 coordinates substrate. Residue Tyr402 is the Nucleophile of the active site. Asn455 carries an N-linked (GlcNAc...) asparagine; by host glycan.

It belongs to the glycosyl hydrolase 34 family. Homotetramer. It depends on Ca(2+) as a cofactor. In terms of processing, N-glycosylated.

It localises to the virion membrane. Its subcellular location is the host apical cell membrane. The enzyme catalyses Hydrolysis of alpha-(2-&gt;3)-, alpha-(2-&gt;6)-, alpha-(2-&gt;8)- glycosidic linkages of terminal sialic acid residues in oligosaccharides, glycoproteins, glycolipids, colominic acid and synthetic substrates.. Inhibited by the neuraminidase inhibitors zanamivir (Relenza) and oseltamivir (Tamiflu). These drugs interfere with the release of progeny virus from infected cells and are effective against all influenza strains. Resistance to neuraminidase inhibitors is quite rare. Catalyzes the removal of terminal sialic acid residues from viral and cellular glycoconjugates. Cleaves off the terminal sialic acids on the glycosylated HA during virus budding to facilitate virus release. Additionally helps virus spread through the circulation by further removing sialic acids from the cell surface. These cleavages prevent self-aggregation and ensure the efficient spread of the progeny virus from cell to cell. Otherwise, infection would be limited to one round of replication. Described as a receptor-destroying enzyme because it cleaves a terminal sialic acid from the cellular receptors. May facilitate viral invasion of the upper airways by cleaving the sialic acid moieties on the mucin of the airway epithelial cells. Likely to plays a role in the budding process through its association with lipid rafts during intracellular transport. May additionally display a raft-association independent effect on budding. Plays a role in the determination of host range restriction on replication and virulence. Sialidase activity in late endosome/lysosome traffic seems to enhance virus replication. This is Neuraminidase from Influenza A virus (strain A/Chile/1/1983 H1N1).